Consider the following 124-residue polypeptide: MLVIILGVIGLLANQVLGLPTQAGGHLRSTDNPPQEELGYWCTYMESCKFCWECAHGICKNKVNESMPLIIENSYLTSCEVSRWYNQCTYSEGNGHYHVMDCSDPVPHNRPHRLLMKIYEKEDL.

The N-terminal stretch at 1-28 (MLVIILGVIGLLANQVLGLPTQAGGHLR) is a signal peptide.

It belongs to the asfivirus MGF 110 family.

Plays a role in virus cell tropism, and may be required for efficient virus replication in macrophages. The chain is Protein MGF 110-5L from Ornithodoros (relapsing fever ticks).